The sequence spans 331 residues: NmrA-like family domain-containing oxidoreductase himF (331 aa).

Residues 8-13 (GATGNQ), 34-38 (RNAES), 55-56 (DG), 76-78 (TNG), Lys-133, and 155-167 (WFFETFLEPQMAA) contribute to the NADP(+) site.

It belongs to the NmrA-type oxidoreductase family.

Its pathway is secondary metabolite biosynthesis. Its function is as follows. NmrA-like family domain-containing oxidoreductase; part of the him gene cluster that mediates the biosynthesis of himeic acid A, a ubiquitin-activating enzyme (E1) inhibitor. First, himA, together with the trans-enoyl reductase himH, catalyzes the formation of apolyketide chain, which is then condensed with leucine by the NRPS activity of himA. Dieckmann cyclization and release from himA gives a tetramic acid intermediate as the product of himA PKS-NRPS. HimG then catalyzes alpha-oxidation of the tetramic acid ring, with a subsequent rearrangement to yield apyrone intermediate. Two terminal methyl groups of polyketide and amide side chains are oxidized to carboxylic acids by himC cytochrome P450 monooxygenase to form himeic acid A. Himeic acid A is further converted to himeic acid B and C during culture growth. No gene responsible for pyrone to pyridone conversion was found in the him gene cluster and himeic acid A is non-enzymatically converted to himeic acid C by the incorporation of an ammonium nitrogen atom in a pH5 buffer, and to himeic acid B at a conversion ratio of 50% during incubation in MeOH for 5 days. The protein is NmrA-like family domain-containing oxidoreductase himF of Aspergillus japonicus.